A 306-amino-acid chain; its full sequence is MEALNTNVDLAGLEGRSVLVTGGASGIGLATAKAWAAAGAYVTLADIQPIEKGEKIASDLSHNGQHVNYTFCDVTSWESQLEAFRSAVKFSPRQTLDIVATFAGTAFAPGNEVDHVLFAGEPSLDAELPAPNTKNIEVNLTGVYYSSWLALYFFRLKPSDSSEPGDKSLILVSSIGGYMDSPKASTYPASKFGVRGLFRSTRARTIDIGVRCNLLAPWFVDTPLIAPVKNAMKARGIEMSKVLAFATMEDCVQAASFCAVNKELHGRALAIQPEGTFDLKDDVEDGWAGDQLRPIMKRRREAGFDA.

Positions 25, 27, 48, 52, and 73 each coordinate NADP(+). Ser-173 serves as the catalytic Proton donor. NADP(+) is bound by residues Tyr-187, Lys-191, Val-220, and Thr-222. Catalysis depends on Tyr-187, which acts as the Proton acceptor. The active-site Lowers pKa of active site Tyr is Lys-191.

Belongs to the short-chain dehydrogenases/reductases (SDR) family. Homodimer.

Its subcellular location is the cytoplasm. The protein localises to the cytosol. It carries out the reaction (1'S,5'S)-5'-hydroxyaverantin + NAD(+) = (S)-5'-oxoaverantin + NADH + H(+). It catalyses the reaction (1'S,5'R)-5'-hydroxyaverantin + NAD(+) = (S)-5'-oxoaverantin + NADH + 2 H(+). Its pathway is mycotoxin biosynthesis. Its function is as follows. 5'-hydroxyaverantin dehydrogenase; part of the fragmented gene cluster that mediates the biosynthesis of dothistromin (DOTH), a polyketide toxin very similar in structure to the aflatoxin precursor, versicolorin B. The first step of the pathway is the conversion of acetate to norsolorinic acid (NOR) and requires the fatty acid synthase subunits hexA and hexB, as well as the polyketide synthase pksA. PksA combines a hexanoyl starter unit and 7 malonyl-CoA extender units to synthesize the precursor NOR. The hexanoyl starter unit is provided to the acyl-carrier protein (ACP) domain by the fungal fatty acid synthase hexA/hexB. The second step is the conversion of NOR to averantin (AVN) and requires the norsolorinic acid ketoreductase nor1, which catalyzes the dehydration of norsolorinic acid to form (1'S)-averantin. The cytochrome P450 monooxygenase avnA then catalyzes the hydroxylation of AVN to 5'hydroxyaverantin (HAVN). The next step is performed by adhA that transforms HAVN to averufin (AVF). Averufin might then be converted to hydroxyversicolorone by cypX and avfA. Hydroxyversicolorone is further converted versiconal hemiacetal acetate (VHA) by moxY. VHA is then the substrate for the versiconal hemiacetal acetate esterase est1 to yield versiconal (VAL). Versicolorin B synthase vbsA then converts VAL to versicolorin B (VERB) by closing the bisfuran ring. Then, the activity of the versicolorin B desaturase verB leads to versicolorin A (VERA). DotB, a predicted chloroperoxidase, may perform epoxidation of the A-ring of VERA. Alternatively, a cytochrome P450, such as cypX or avnA could catalyze this step. It is also possible that another, uncharacterized, cytochrome P450 enzyme is responsible for this step. Opening of the epoxide could potentially be achieved by the epoxide hydrolase epoA. However, epoA seems not to be required for DOTH biosynthesis, but other epoxide hydrolases may have the ability to complement this hydrolysis. Alternatively, opening of the epoxide ring could be achieved non-enzymatically. The next step is the deoxygenation of ring A to yield the 5,8-dihydroxyanthraquinone which is most likely catalyzed by the NADPH dehydrogenase encoded by ver1. The last stages of DOTH biosynthesis are proposed to involve hydroxylation of the bisfuran. OrdB and norB might have oxidative roles here. An alternative possibility is that cytochrome P450 monoogenases such as avnA and cypX might perform these steps in addition to previously proposed steps. This is 5'-hydroxyaverantin dehydrogenase from Dothistroma septosporum (strain NZE10 / CBS 128990) (Red band needle blight fungus).